Reading from the N-terminus, the 400-residue chain is Subtilisin-like protease 11 (400 aa).

An N-terminal signal peptide occupies residues 1–19; that stretch reads MGLFKVIFTAVAALSAVDA. A propeptide spanning residues 20-117 is cleaved from the precursor; that stretch reads AELLSSAKSK…VEHDRHVYIS (98 aa). The Inhibitor I9 domain occupies 35–116; the sequence is SYLVVMKDSV…FVEHDRHVYI (82 aa). Positions 127–400 constitute a Peptidase S8 domain; sequence SWGLGRVSHR…NKLLYNGSGK (274 aa). Residue Asn138 is glycosylated (N-linked (GlcNAc...) asparagine). Asp159 serves as the catalytic Charge relay system. Asn181 is a glycosylation site (N-linked (GlcNAc...) asparagine). His191 (charge relay system) is an active-site residue. 2 N-linked (GlcNAc...) asparagine glycosylation sites follow: Asn252 and Asn337. The active-site Charge relay system is Ser346. N-linked (GlcNAc...) asparagine glycans are attached at residues Asn388 and Asn396.

This sequence belongs to the peptidase S8 family.

It localises to the secreted. Secreted subtilisin-like serine protease with keratinolytic activity that contributes to pathogenicity. The chain is Subtilisin-like protease 11 (SUB11) from Arthroderma benhamiae (strain ATCC MYA-4681 / CBS 112371) (Trichophyton mentagrophytes).